Consider the following 470-residue polypeptide: Pyruvate kinase I (470 aa).

Arg-32 is a substrate binding site. Asn-34, Ser-36, Asp-66, and Thr-67 together coordinate K(+). 34 to 37 serves as a coordination point for ATP; that stretch reads NFSH. Positions 73 and 156 each coordinate ATP. Lys-220 serves as a coordination point for substrate. Glu-222 provides a ligand contact to Mg(2+). The substrate site is built by Gly-245, Asp-246, and Thr-278. Asp-246 is a binding site for Mg(2+).

Belongs to the pyruvate kinase family. In terms of assembly, homotetramer. Mg(2+) serves as cofactor. Requires K(+) as cofactor.

It catalyses the reaction pyruvate + ATP = phosphoenolpyruvate + ADP + H(+). The protein operates within carbohydrate degradation; glycolysis; pyruvate from D-glyceraldehyde 3-phosphate: step 5/5. Its activity is regulated as follows. Belongs to type I PK; fructose 1,6-bisphosphate-activated. Functionally, catalyzes the formation of pyruvate in the last step of glycolysis, it is irreversible under physiological conditions. The reaction is critical for the control of metabolic flux in the second part of glycolysis. This chain is Pyruvate kinase I (pykF), found in Salmonella typhimurium (strain LT2 / SGSC1412 / ATCC 700720).